We begin with the raw amino-acid sequence, 138 residues long: Large ribosomal subunit protein uL16 (138 aa).

Positions 1-13 (MLQPKRRKYRKEQ) are enriched in basic residues. Positions 1 to 20 (MLQPKRRKYRKEQKGRNTGI) are disordered.

Belongs to the universal ribosomal protein uL16 family. Part of the 50S ribosomal subunit.

Its function is as follows. Binds 23S rRNA and is also seen to make contacts with the A and possibly P site tRNAs. The sequence is that of Large ribosomal subunit protein uL16 from Ralstonia nicotianae (strain ATCC BAA-1114 / GMI1000) (Ralstonia solanacearum).